The primary structure comprises 2754 residues: Neurobeachin-like protein 2 (2754 aa).

Disordered regions lie at residues 1298–1338 (TAGS…SEAP) and 1364–1438 (SVGS…QQTS). 2 stretches are compositionally biased toward pro residues: residues 1301–1323 (SPPP…PPTE) and 1388–1400 (TPSP…PFPA). Over residues 1425 to 1437 (GDDTSNTSNPQQT) the composition is skewed to polar residues. Ser1647 is subject to Phosphoserine. Thr1867 carries the phosphothreonine modification. Residues 1915 to 2040 (EQREKLVLSA…VRNQVYSWLL (126 aa)) enclose the BEACH-type PH domain. One can recognise a BEACH domain in the interval 2053–2345 (RSPQEMLRAS…QLLKEPHPTR (293 aa)). 7 WD repeats span residues 2386–2424 (LVLA…SWLP), 2448–2491 (RLLS…ALPR), 2494–2531 (LLSQ…VWRL), 2544–2582 (KPVQ…IHTV), 2589–2631 (AALR…TYSL), 2639–2674 (KLRA…ILQL), and 2682–2717 (PPLP…VVAG). 2 positions are modified to phosphoserine: Ser2739 and Ser2742.

This sequence belongs to the WD repeat neurobeachin family. Expressed in megakaryocytes.

Its subcellular location is the endoplasmic reticulum. Functionally, probably involved in thrombopoiesis. Plays a role in the development or secretion of alpha-granules, that contain several growth factors important for platelet biogenesis. The protein is Neurobeachin-like protein 2 (NBEAL2) of Homo sapiens (Human).